The chain runs to 279 residues: Movement protein (279 aa).

The segment at 247-279 (ESEELNVESPPAAIGSSSASRSEAFRPQVVNGL) is disordered. The segment covering 254–268 (ESPPAAIGSSSASRS) has biased composition (low complexity).

This sequence belongs to the cucumovirus movement protein family.

The protein resides in the host cell junction. It is found in the host plasmodesma. In terms of biological role, transports viral genome to neighboring plant cells directly through plasmosdesmata, without any budding. The movement protein allows efficient cell to cell propagation, by bypassing the host cell wall barrier. Acts by forming a tubular structure at the host plasmodesmata, enlarging it enough to allow free passage of virion capsids. In Cucumis sativus (Cucumber), this protein is Movement protein.